The primary structure comprises 282 residues: Pantothenate synthetase (282 aa).

30-37 (MGNLHQGH) is an ATP binding site. The active-site Proton donor is His-37. Residue Gln-61 participates in (R)-pantoate binding. Gln-61 lines the beta-alanine pocket. 149–152 (GKKD) lines the ATP pocket. Residue Gln-155 participates in (R)-pantoate binding. ATP is bound by residues Ile-178 and 186–189 (MSSR).

This sequence belongs to the pantothenate synthetase family. Homodimer.

It localises to the cytoplasm. It carries out the reaction (R)-pantoate + beta-alanine + ATP = (R)-pantothenate + AMP + diphosphate + H(+). It participates in cofactor biosynthesis; (R)-pantothenate biosynthesis; (R)-pantothenate from (R)-pantoate and beta-alanine: step 1/1. Catalyzes the condensation of pantoate with beta-alanine in an ATP-dependent reaction via a pantoyl-adenylate intermediate. This is Pantothenate synthetase from Shewanella loihica (strain ATCC BAA-1088 / PV-4).